The following is a 112-amino-acid chain: Macrodomain Ori protein (112 aa).

Positions 91–112 (FHTLSGGKPQVEGAEDYTEADD) are disordered. Residues 103-112 (GAEDYTEADD) show a composition bias toward acidic residues.

Belongs to the MaoP family.

Its function is as follows. Involved in the organization of the Ori region of the chromosome into a macrodomain (MD). It constrains DNA mobility in the Ori macrodomain and limits long-distance DNA interactions with other chromosomal regions. This chain is Macrodomain Ori protein, found in Salmonella choleraesuis (strain SC-B67).